We begin with the raw amino-acid sequence, 559 residues long: Dihydroxy-acid dehydratase (559 aa).

[2Fe-2S] cluster is bound at residue C56. Residue D88 coordinates Mg(2+). C129 is a binding site for [2Fe-2S] cluster. Positions 130 and 131 each coordinate Mg(2+). K131 carries the N6-carboxylysine modification. A [2Fe-2S] cluster-binding site is contributed by C198. Residue E449 coordinates Mg(2+). S475 acts as the Proton acceptor in catalysis.

It belongs to the IlvD/Edd family. As to quaternary structure, homodimer. [2Fe-2S] cluster serves as cofactor. It depends on Mg(2+) as a cofactor.

It catalyses the reaction (2R)-2,3-dihydroxy-3-methylbutanoate = 3-methyl-2-oxobutanoate + H2O. The enzyme catalyses (2R,3R)-2,3-dihydroxy-3-methylpentanoate = (S)-3-methyl-2-oxopentanoate + H2O. The protein operates within amino-acid biosynthesis; L-isoleucine biosynthesis; L-isoleucine from 2-oxobutanoate: step 3/4. It functions in the pathway amino-acid biosynthesis; L-valine biosynthesis; L-valine from pyruvate: step 3/4. Functions in the biosynthesis of branched-chain amino acids. Catalyzes the dehydration of (2R,3R)-2,3-dihydroxy-3-methylpentanoate (2,3-dihydroxy-3-methylvalerate) into 2-oxo-3-methylpentanoate (2-oxo-3-methylvalerate) and of (2R)-2,3-dihydroxy-3-methylbutanoate (2,3-dihydroxyisovalerate) into 2-oxo-3-methylbutanoate (2-oxoisovalerate), the penultimate precursor to L-isoleucine and L-valine, respectively. The sequence is that of Dihydroxy-acid dehydratase from Ruthia magnifica subsp. Calyptogena magnifica.